Here is a 70-residue protein sequence, read N- to C-terminus: ATP synthase subunit c (70 aa).

2 helical membrane passes run 4–24 (IAAGIALCGSAIGAGIGNGML) and 48–68 (ISMALVEAMPIIVIAMSFVLI).

Belongs to the ATPase C chain family. In terms of assembly, F-type ATPases have 2 components, F(1) - the catalytic core - and F(0) - the membrane proton channel. F(1) has five subunits: alpha(3), beta(3), gamma(1), delta(1), epsilon(1). F(0) has three main subunits: a(1), b(2) and c(10-14). The alpha and beta chains form an alternating ring which encloses part of the gamma chain. F(1) is attached to F(0) by a central stalk formed by the gamma and epsilon chains, while a peripheral stalk is formed by the delta and b chains.

It is found in the cell membrane. Its function is as follows. F(1)F(0) ATP synthase produces ATP from ADP in the presence of a proton or sodium gradient. F-type ATPases consist of two structural domains, F(1) containing the extramembraneous catalytic core and F(0) containing the membrane proton channel, linked together by a central stalk and a peripheral stalk. During catalysis, ATP synthesis in the catalytic domain of F(1) is coupled via a rotary mechanism of the central stalk subunits to proton translocation. In terms of biological role, key component of the F(0) channel; it plays a direct role in translocation across the membrane. A homomeric c-ring of between 10-14 subunits forms the central stalk rotor element with the F(1) delta and epsilon subunits. The chain is ATP synthase subunit c from Oenococcus oeni (strain ATCC BAA-331 / PSU-1).